The chain runs to 858 residues: Translation initiation factor IF-2 (858 aa).

The interval 59–147 (KEHAEKRRER…GKKLEGQERK (89 aa)) is disordered. The tr-type G domain occupies 361–530 (PRPPVVVVMG…LLVADLLELK (170 aa)). The G1 stretch occupies residues 370–377 (GHVDHGKT). 370 to 377 (GHVDHGKT) contacts GTP. The tract at residues 395-399 (GITQH) is G2. Positions 416–419 (DTPG) are G3. GTP-binding positions include 416 to 420 (DTPGH) and 470 to 473 (NKID). Residues 470–473 (NKID) are G4. The tract at residues 506–508 (SAK) is G5.

This sequence belongs to the TRAFAC class translation factor GTPase superfamily. Classic translation factor GTPase family. IF-2 subfamily.

It is found in the cytoplasm. In terms of biological role, one of the essential components for the initiation of protein synthesis. Protects formylmethionyl-tRNA from spontaneous hydrolysis and promotes its binding to the 30S ribosomal subunits. Also involved in the hydrolysis of GTP during the formation of the 70S ribosomal complex. The polypeptide is Translation initiation factor IF-2 (Caldicellulosiruptor saccharolyticus (strain ATCC 43494 / DSM 8903 / Tp8T 6331)).